Here is a 310-residue protein sequence, read N- to C-terminus: Methionyl-tRNA formyltransferase (310 aa).

111-114 (SLLP) provides a ligand contact to (6S)-5,6,7,8-tetrahydrofolate.

This sequence belongs to the Fmt family.

The catalysed reaction is L-methionyl-tRNA(fMet) + (6R)-10-formyltetrahydrofolate = N-formyl-L-methionyl-tRNA(fMet) + (6S)-5,6,7,8-tetrahydrofolate + H(+). Functionally, attaches a formyl group to the free amino group of methionyl-tRNA(fMet). The formyl group appears to play a dual role in the initiator identity of N-formylmethionyl-tRNA by promoting its recognition by IF2 and preventing the misappropriation of this tRNA by the elongation apparatus. The polypeptide is Methionyl-tRNA formyltransferase (Nitrobacter hamburgensis (strain DSM 10229 / NCIMB 13809 / X14)).